A 797-amino-acid polypeptide reads, in one-letter code: Plakophilin-3 (797 aa).

The interval 56-82 (QLGQQPRHNGAAEPEPEAETARGTSRG) is disordered. Residue Arg-81 is modified to Omega-N-methylarginine. Phosphoserine occurs at positions 123, 180, and 183. The residue at position 195 (Tyr-195) is a Phosphotyrosine; by SRC. 2 positions are modified to phosphoserine: Ser-238 and Ser-240. At Thr-250 the chain carries Phosphothreonine. An Omega-N-methylarginine modification is found at Arg-261. The interval 283 to 288 (SLSLSL) is required for interaction with SFN. Residues Ser-285, Ser-313, Ser-314, and Ser-331 each carry the phosphoserine modification. Positions 294–724 (LPDVHGFNSY…AEVLVNIIAV (431 aa)) are required for interaction with GSK3B. ARM repeat units lie at residues 305–348 (SHRT…HKCY), 351–390 (AAAK…NLIY), 393–432 (ADNK…NLSS), 449–487 (TDLV…NLSS), 491–536 (ATRQ…NLSY), 596–637 (PKGL…NITA), 645–684 (VLSR…NLSR), and 689–730 (KDEM…NLVV). Residues 516–797 (AGKCEDKSVE…GYRKEDFLGP (282 aa)) form a required for binding to PKP2 mRNA region.

It belongs to the beta-catenin family. Found in a complex composed of CDH1, RAP1A and PKP3; PKP3 acts as a scaffold protein within the complex, the complex is required for CDH1 localization to mature desmosome cell junctions. Interacts with FXR1; the interaction facilitates the binding of PKP3 to PKP2 mRNA. Interacts (via ARM repeats) with GSK3B; the interaction may be involved in PKP3 protein degradation. Interacts with hyperphosphorylated and hypophosphorylated RB1; the interaction inhibits RB1 interaction with and repression of the transcription factor E2F1, potentially via sequestering RB1 to the cytoplasm. Interacts with CDKN1A; the interaction sequesters CDKN1A to the cytoplasm thereby repressing its role as an inhibitor of CDK4- and CDK6-driven RB1 phosphorylation. Interacts (via N-terminus) with SFN; the interaction maintains the cytoplasmic pool of PKP3, facilitates PKP3 exchange at desmosomes and restricts PKP3 localization to existing desmosome cell junctions. Interacts (via N-terminus) with JUP; the interaction is required for PKP3 localization to desmosome cell-cell junctions. In terms of processing, phosphorylated at Ser-285 when localized to the cytoplasm, PKP3 at desmosome cell junctions is not phosphorylated. Phosphorylation at Try-195 by SRC is induced by reactive oxygen species and potentially acts as a release mechanism from desmosome cell-cell junctions. As to expression, expressed in the epidermis of the skin, in squamous non-cornifying epithelial cells in the vagina, single layer epithelia of the duodenum and pancreas acini and non-epithelial dendritic reticulum cells of lymph node follicles (at protein level). In terms of tissue distribution, expressed in the oral cavity mucosa, epidermis and small intestine epithelium (at protein level). Expressed in the oral cavity mucosa and epithelial cells of the crypts and villi in the small intestine (at protein level). Expressed in the epidermis with more abundant expression found in the basal and low spinous cells (at protein level).

The protein localises to the nucleus. The protein resides in the cell junction. It is found in the desmosome. It localises to the cytoplasm. Its subcellular location is the cell membrane. The protein localises to the adherens junction. In terms of biological role, a component of desmosome cell-cell junctions which are required for positive regulation of cellular adhesion. Required for the localization of DSG2, DSP and PKP2 to mature desmosome junctions. May also play a role in the maintenance of DSG3 protein abundance in keratinocytes. Required for the formation of DSP-containing desmosome precursors in the cytoplasm during desmosome assembly. Also regulates the accumulation of CDH1 to mature desmosome junctions, via cAMP-dependent signaling and its interaction with activated RAP1A. Positively regulates the stabilization of PKP2 mRNA and therefore protein abundance, via its interaction with FXR1, may also regulate the protein abundance of DSP via the same mechanism. May also regulate the protein abundance of the desmosome component PKP1. Required for the organization of desmosome junctions at intercellular borders between basal keratinocytes of the epidermis, as a result plays a role in maintenance of the dermal barrier and regulation of the dermal inflammatory response. Required during epidermal keratinocyte differentiation for cell adherence at tricellular cell-cell contacts, via regulation of the timely formation of adherens junctions and desmosomes in a calcium-dependent manner, and may also play a role in the organization of the intracellular actin fiber belt. Acts as a negative regulator of the inflammatory response in hematopoietic cells of the skin and intestine, via modulation of proinflammatory cytokine production. Important for epithelial barrier maintenance in the intestine to reduce intestinal permeability, thereby plays a role in protection from intestinal-derived endotoxemia. Required for the development of hair follicles, via a role in the regulation of inner root sheaf length, correct alignment and anterior-posterior polarity of hair follicles. Promotes proliferation and cell-cycle G1/S phase transition of keratinocytes. Promotes E2F1-driven transcription of G1/S phase promoting genes by acting to release E2F1 from its inhibitory interaction with RB1, via sequestering RB1 and CDKN1A to the cytoplasm and thereby increasing CDK4- and CDK6-driven phosphorylation of RB1. May act as a scaffold protein to facilitate MAPK phosphorylation of RPS6KA protein family members and subsequently promote downstream EGFR signaling. May play a role in the positive regulation of transcription of Wnt-mediated TCF-responsive target genes. This Homo sapiens (Human) protein is Plakophilin-3 (PKP3).